The chain runs to 98 residues: Feather keratin 4 (98 aa).

S2 is subject to N-acetylserine.

The protein belongs to the avian keratin family. The avian keratins (F-ker, S-ker, C-ker and B-ker) are a complex mixture of very similar polypeptides.

The sequence is that of Feather keratin 4 from Gallus gallus (Chicken).